Here is a 400-residue protein sequence, read N- to C-terminus: MEAVLPSRCNREDVPGKARAERFVSGFPSVCEQKTEQEKLSGVVKRVHLDLRKKYRKAGDFEKIWLEHCKDDGRLCEYAVAMKALADNHWAKKCEGEGRIEWCLGVCQEYFFNGGKKKALEKDAKRDALNKLQSSSHAEAGVSDFGVPSIKPLNDEYMTGKIRLLDVGSCYNPFLKYEDFLAVGIDIVPAVETVFKCDFLNLQIQRPLQLAPDAIDAFLKQLSSPIDYLPTELFHVIVFSLLLSYFPSPYQRWICCKKAHELLTLNGLLLIITPDSSHQNRHAVMMKSWKIAIESLGFRRMTYSKFSHMHLMAFRKTSLKTTSDLLTRNYPDMLYIPQDFNYDGEEDHFSPCCARSELEDEQLACGFTELPDTPYDSDSGESHNSTMPFYEFEDPILLLT.

Positions 99, 168, 186, 198, 199, and 240 each coordinate S-adenosyl-L-methionine.

The protein belongs to the BMT2/SAMTOR family. Interacts with the GATOR1 complex; interaction is disrupted when samtor binds S-adenosyl-L-methionine. Interacts with the KICSTOR complex; interaction is disrupted when samtor binds S-adenosyl-L-methionine.

Functionally, S-adenosyl-L-methionine-binding protein that acts as an inhibitor of mTORC1 signaling via interaction with the GATOR1 and KICSTOR complexes. Acts as a sensor of S-adenosyl-L-methionine to signal methionine sufficiency to mTORC1: in presence of methionine, binds S-adenosyl-L-methionine, leading to disrupt interaction with the GATOR1 and KICSTOR complexes and promote mTORC1 signaling. Upon methionine starvation, S-adenosyl-L-methionine levels are reduced, thereby promoting the association with GATOR1 and KICSTOR, leading to inhibit mTORC1 signaling. Probably also acts as a S-adenosyl-L-methionine-dependent methyltransferase. The polypeptide is S-adenosylmethionine sensor upstream of mTORC1 (Xenopus laevis (African clawed frog)).